A 212-amino-acid polypeptide reads, in one-letter code: Ribosomal RNA large subunit methyltransferase E (212 aa).

S-adenosyl-L-methionine is bound by residues glycine 57, tryptophan 59, aspartate 77, aspartate 93, and aspartate 122. The active-site Proton acceptor is lysine 162.

The protein belongs to the class I-like SAM-binding methyltransferase superfamily. RNA methyltransferase RlmE family.

Its subcellular location is the cytoplasm. It carries out the reaction uridine(2552) in 23S rRNA + S-adenosyl-L-methionine = 2'-O-methyluridine(2552) in 23S rRNA + S-adenosyl-L-homocysteine + H(+). In terms of biological role, specifically methylates the uridine in position 2552 of 23S rRNA at the 2'-O position of the ribose in the fully assembled 50S ribosomal subunit. This Coxiella burnetii (strain CbuK_Q154) (Coxiella burnetii (strain Q154)) protein is Ribosomal RNA large subunit methyltransferase E.